A 618-amino-acid chain; its full sequence is D-glucuronyl C5-epimerase (618 aa).

The Cytoplasmic segment spans residues 1 to 11 (MRCLAARVNYK). Residues 12–29 (TLIIICALFTLVTVLLWN) traverse the membrane as a helical; Signal-anchor for type II membrane protein segment. At 30 to 618 (KCSSDKAIQF…YLKGSRAKHN (589 aa)) the chain is on the lumenal side. Residues Tyr-180, 185-187 (RDR), Gln-202, Tyr-210, Gln-213, and Gln-216 contribute to the substrate site. Residues Thr-238, Glu-240, Thr-269, Asn-270, and Asp-393 each coordinate Ca(2+). Residues 430-433 (KLGE), 500-501 (EY), Asn-511, Tyr-515, Tyr-561, Arg-564, and 573-582 (NLARWDYHTT) contribute to the substrate site.

Belongs to the D-glucuronyl C5-epimerase family. Homodimer. Interacts with HS2ST1. Widely expressed with highest levels in lung and lowest levels in spleen.

It is found in the golgi apparatus membrane. The enzyme catalyses [heparosan-N-sulfate](n) = [heparan-N-sulfate](n). Its pathway is glycan metabolism; heparan sulfate biosynthesis. It functions in the pathway glycan metabolism; heparin biosynthesis. In terms of biological role, converts D-glucuronic acid residues adjacent to N-sulfate sugar residues to L-iduronic acid residues, both in maturing heparan sulfate (HS) and heparin chains. This is important for further modifications that determine the specificity of interactions between these glycosaminoglycans and proteins. This Mus musculus (Mouse) protein is D-glucuronyl C5-epimerase (Glce).